Consider the following 159-residue polypeptide: Sec-independent protein translocase protein TatB (159 aa).

The chain crosses the membrane as a helical span at residues 1–21 (MIDIGLSKMALIGAVALIVIG).

It belongs to the TatB family. In terms of assembly, the Tat system comprises two distinct complexes: a TatABC complex, containing multiple copies of TatA, TatB and TatC subunits, and a separate TatA complex, containing only TatA subunits. Substrates initially bind to the TatABC complex, which probably triggers association of the separate TatA complex to form the active translocon.

The protein localises to the cell inner membrane. Its function is as follows. Part of the twin-arginine translocation (Tat) system that transports large folded proteins containing a characteristic twin-arginine motif in their signal peptide across membranes. Together with TatC, TatB is part of a receptor directly interacting with Tat signal peptides. TatB may form an oligomeric binding site that transiently accommodates folded Tat precursor proteins before their translocation. The chain is Sec-independent protein translocase protein TatB from Acidovorax sp. (strain JS42).